Here is a 65-residue protein sequence, read N- to C-terminus: UPF0434 protein BH12860 (65 aa).

The protein belongs to the UPF0434 family.

The polypeptide is UPF0434 protein BH12860 (Bartonella henselae (strain ATCC 49882 / DSM 28221 / CCUG 30454 / Houston 1) (Rochalimaea henselae)).